Reading from the N-terminus, the 410-residue chain is LL-diaminopimelate aminotransferase (410 aa).

The substrate site is built by tyrosine 15 and glycine 42. Residues tyrosine 72, 108 to 109 (SK), tyrosine 132, asparagine 187, tyrosine 218, and 246 to 248 (SFS) contribute to the pyridoxal 5'-phosphate site. Residues lysine 109, tyrosine 132, and asparagine 187 each coordinate substrate. Residue lysine 249 is modified to N6-(pyridoxal phosphate)lysine. Arginine 257 and asparagine 292 together coordinate pyridoxal 5'-phosphate. Residues asparagine 292 and arginine 388 each coordinate substrate.

This sequence belongs to the class-I pyridoxal-phosphate-dependent aminotransferase family. LL-diaminopimelate aminotransferase subfamily. Homodimer. Requires pyridoxal 5'-phosphate as cofactor.

The catalysed reaction is (2S,6S)-2,6-diaminopimelate + 2-oxoglutarate = (S)-2,3,4,5-tetrahydrodipicolinate + L-glutamate + H2O + H(+). It participates in amino-acid biosynthesis; L-lysine biosynthesis via DAP pathway; LL-2,6-diaminopimelate from (S)-tetrahydrodipicolinate (aminotransferase route): step 1/1. Its function is as follows. Involved in the synthesis of meso-diaminopimelate (m-DAP or DL-DAP), required for both lysine and peptidoglycan biosynthesis. Catalyzes the direct conversion of tetrahydrodipicolinate to LL-diaminopimelate. This Geobacter sulfurreducens (strain ATCC 51573 / DSM 12127 / PCA) protein is LL-diaminopimelate aminotransferase.